Reading from the N-terminus, the 140-residue chain is Protein SNA4 (140 aa).

Residues 1–8 (MCCYCVCC) are Cytoplasmic-facing. Residues Cys2, Cys3, Cys5, Cys7, and Cys8 are each lipidated (S-palmitoyl cysteine). A helical transmembrane segment spans residues 9–29 (TVSDFILYIVAFFFPPAAVLL). Topologically, residues 30–41 (RSGPCSSDFLLN) are vacuolar. The chain crosses the membrane as a helical span at residues 42 to 62 (VLLTLLGFLPGMLHAFYYITI). Residues 63–140 (TSPLRNAEYV…LVESPPPYVP (78 aa)) lie on the Cytoplasmic side of the membrane. Residues 84-140 (RNVPSNRPQNSQTPQNRPQQGSSARNVYPSVETPLLQGAAPHDNKQSLVESPPPYVP) are disordered. Residues 85 to 108 (NVPSNRPQNSQTPQNRPQQGSSAR) are compositionally biased toward polar residues. Lys128 is covalently cross-linked (Glycyl lysine isopeptide (Lys-Gly) (interchain with G-Cter in ubiquitin)). Ser134 is subject to Phosphoserine.

The protein belongs to the UPF0057 (PMP3) family.

The protein resides in the vacuole membrane. The polypeptide is Protein SNA4 (SNA4) (Saccharomyces cerevisiae (strain ATCC 204508 / S288c) (Baker's yeast)).